Consider the following 458-residue polypeptide: MSFDLKNDISKKIHFIGIGGVSMSGLAEILLERGFKVSGSDMNGSPMIDKLKEHGAEIYLGHNEKNINNVDIVVYTAAIPEDNPELIYARKNNISLMTRAEFLGSLMKGHKYNIAISGTHGKTTTTSMVSHIALTEDVDPTILVGGNLDIINGNVLAGKSDYFITEACEYKASFLEFYPYIGVILNIDADHLDYYKNIDDIENTFAKFVNLIPKEGYLIANADDKRVARVASNATCNVVSFGIDNGDIRAKNISFNESGFSSFDVYKSSELLFNIELNVPGKHNILNALSAIASALTLKISHKSIIDGLKSFKGTHRRFEIKGVKNGITVIDDYAHHPTEIKATLDAAKNYPHNKIYCVFQPHTYSRTLSLFDDFSNSFSGVDELVLADIYAAREKDTGVVSSLKLSEAINKNGVKSSNLHSFEDIVNYFKSKLNDGDILLTVGAGDVFKIGEMFLSK.

118 to 124 (GTHGKTT) contributes to the ATP binding site.

It belongs to the MurCDEF family.

It localises to the cytoplasm. The catalysed reaction is UDP-N-acetyl-alpha-D-muramate + L-alanine + ATP = UDP-N-acetyl-alpha-D-muramoyl-L-alanine + ADP + phosphate + H(+). The protein operates within cell wall biogenesis; peptidoglycan biosynthesis. In terms of biological role, cell wall formation. This is UDP-N-acetylmuramate--L-alanine ligase from Clostridium acetobutylicum (strain ATCC 824 / DSM 792 / JCM 1419 / IAM 19013 / LMG 5710 / NBRC 13948 / NRRL B-527 / VKM B-1787 / 2291 / W).